The primary structure comprises 856 residues: Envelope glycoprotein gp160 (856 aa).

The N-terminal stretch at 1–32 (MRVKEKYQHLRRWGWRWGTMLLGMLMICSATE) is a signal peptide. Topologically, residues 33 to 684 (KLWVTVYYGV…ITNWLWYIKI (652 aa)) are extracellular. Cys-54 and Cys-74 are disulfide-bonded. N-linked (GlcNAc...) asparagine; by host glycans are attached at residues Asn-88, Asn-136, Asn-141, Asn-156, Asn-160, Asn-186, Asn-197, Asn-230, Asn-234, Asn-241, Asn-262, Asn-276, Asn-289, Asn-295, Asn-301, Asn-332, Asn-339, and Asn-356. Intrachain disulfides connect Cys-119/Cys-205, Cys-126/Cys-196, Cys-131/Cys-157, Cys-218/Cys-247, and Cys-228/Cys-239. Residues 131-156 (CTDLKNDTNTNSSSGGMIMEKGEIKN) are V1. The interval 157–196 (CSFNISTSIRGKVQKEYAFFYKHDIIPIDNDTTSYTLTSC) is V2. Positions 296-330 (CTRPNNNTRKRIRIQRGPGRTFVTIGKIGNMRQAH) are V3. The cysteines at positions 296 and 331 are disulfide-linked. The interval 364 to 374 (SSGGDLEIVTH) is CD4-binding loop. Disulfide bonds link Cys-378/Cys-445 and Cys-385/Cys-418. Residues 385–418 (CNSTQLFNSTWFNSTWSTEGSNNTEGSDTITLPC) form a V4 region. Residues Asn-386, Asn-392, Asn-397, Asn-406, Asn-448, and Asn-463 are each glycosylated (N-linked (GlcNAc...) asparagine; by host). 2 V5 regions span residues 461–471 (NNNGSEIFRPG) and 463–471 (NGSEIFRPG). Residues 512 to 532 (AVGIGALFLGFLGAAGSTMGA) are fusion peptide. The interval 574–592 (KQLQARILAVERYLKDQQL) is immunosuppression. A disulfide bond links Cys-598 and Cys-604. Asn-611, Asn-616, Asn-624, Asn-637, and Asn-674 each carry an N-linked (GlcNAc...) asparagine; by host glycan. A coiled-coil region spans residues 633–667 (REINNYTSLIHSLIEESQNQQEKNEQELLELDKWA). The tract at residues 662–683 (ELDKWASLWNWFNITNWLWYIK) is MPER; binding to GalCer. A helical transmembrane segment spans residues 685–705 (FIMIVGGLVGLRIVFAVLSIV). Residues 706-856 (NRVRQGHSPL…IRQGLERILL (151 aa)) are Cytoplasmic-facing. The segment at 715 to 742 (LSFQTHLPTPGGPDRPEGIEEEGGERDR) is disordered. S-palmitoyl cysteine; by host attachment occurs at residues Cys-764 and Cys-837. The short motif at 855-856 (LL) is the Di-leucine internalization motif element.

Belongs to the HIV-1 env protein family. The mature envelope protein (Env) consists of a homotrimer of non-covalently associated gp120-gp41 heterodimers. The resulting complex protrudes from the virus surface as a spike. There seems to be as few as 10 spikes on the average virion. Interacts with host CD4, CCR5 and CXCR4. Gp120 also interacts with the C-type lectins CD209/DC-SIGN and CLEC4M/DC-SIGNR (collectively referred to as DC-SIGN(R)). Gp120 and gp41 interact with GalCer. Gp120 interacts with host ITGA4/ITGB7 complex; on CD4+ T-cells, this interaction results in rapid activation of integrin ITGAL/LFA-1, which facilitates efficient cell-to-cell spreading of HIV-1. Gp120 interacts with cell-associated heparan sulfate; this interaction increases virus infectivity on permissive cells and may be involved in infection of CD4- cells. In terms of assembly, the mature envelope protein (Env) consists of a homotrimer of non-covalently associated gp120-gp41 heterodimers. The resulting complex protrudes from the virus surface as a spike. There seems to be as few as 10 spikes on the average virion. In terms of processing, highly glycosylated by host. The high number of glycan on the protein is reffered to as 'glycan shield' because it contributes to hide protein sequence from adaptive immune system. Palmitoylation of the transmembrane protein and of Env polyprotein (prior to its proteolytic cleavage) is essential for their association with host cell membrane lipid rafts. Palmitoylation is therefore required for envelope trafficking to classical lipid rafts, but not for viral replication. Post-translationally, specific enzymatic cleavages in vivo yield mature proteins. Envelope glycoproteins are synthesized as an inactive precursor that is heavily N-glycosylated and processed likely by host cell furin in the Golgi to yield the mature SU and TM proteins. The cleavage site between SU and TM requires the minimal sequence [KR]-X-[KR]-R. About 2 of the 9 disulfide bonds of gp41 are reduced by P4HB/PDI, following binding to CD4 receptor.

The protein resides in the virion membrane. The protein localises to the host cell membrane. It localises to the host endosome membrane. Oligomerizes in the host endoplasmic reticulum into predominantly trimers. In a second time, gp160 transits in the host Golgi, where glycosylation is completed. The precursor is then proteolytically cleaved in the trans-Golgi and thereby activated by cellular furin or furin-like proteases to produce gp120 and gp41. Functionally, attaches the virus to the host lymphoid cell by binding to the primary receptor CD4. This interaction induces a structural rearrangement creating a high affinity binding site for a chemokine coreceptor like CXCR4 and/or CCR5. Acts as a ligand for CD209/DC-SIGN and CLEC4M/DC-SIGNR, which are respectively found on dendritic cells (DCs), and on endothelial cells of liver sinusoids and lymph node sinuses. These interactions allow capture of viral particles at mucosal surfaces by these cells and subsequent transmission to permissive cells. HIV subverts the migration properties of dendritic cells to gain access to CD4+ T-cells in lymph nodes. Virus transmission to permissive T-cells occurs either in trans (without DCs infection, through viral capture and transmission), or in cis (following DCs productive infection, through the usual CD4-gp120 interaction), thereby inducing a robust infection. In trans infection, bound virions remain infectious over days and it is proposed that they are not degraded, but protected in non-lysosomal acidic organelles within the DCs close to the cell membrane thus contributing to the viral infectious potential during DCs' migration from the periphery to the lymphoid tissues. On arrival at lymphoid tissues, intact virions recycle back to DCs' cell surface allowing virus transmission to CD4+ T-cells. Its function is as follows. Acts as a class I viral fusion protein. Under the current model, the protein has at least 3 conformational states: pre-fusion native state, pre-hairpin intermediate state, and post-fusion hairpin state. During fusion of viral and target intracellular membranes, the coiled coil regions (heptad repeats) assume a trimer-of-hairpins structure, positioning the fusion peptide in close proximity to the C-terminal region of the ectodomain. The formation of this structure appears to drive apposition and subsequent fusion of viral and target cell membranes. Complete fusion occurs in host cell endosomes and is dynamin-dependent, however some lipid transfer might occur at the plasma membrane. The virus undergoes clathrin-dependent internalization long before endosomal fusion, thus minimizing the surface exposure of conserved viral epitopes during fusion and reducing the efficacy of inhibitors targeting these epitopes. Membranes fusion leads to delivery of the nucleocapsid into the cytoplasm. In Homo sapiens (Human), this protein is Envelope glycoprotein gp160.